The chain runs to 622 residues: FERM domain-containing protein 6 (622 aa).

An FERM domain is found at 16–328 (RSVCIFLPND…NSHRLYMNLQ (313 aa)). Residues 364 to 445 (KRSRASGSSA…SGVESGGKDR (82 aa)) form a disordered region. Low complexity-rich tracts occupy residues 384 to 395 (HSTASHSSSHTS) and 425 to 438 (SSMT…TSGV). Ser-522 is subject to Phosphoserine. Thr-523 is modified (phosphothreonine). A phosphoserine mark is found at Ser-525, Ser-542, and Ser-544.

The protein resides in the cytoplasm. The protein localises to the cell membrane. This Homo sapiens (Human) protein is FERM domain-containing protein 6 (FRMD6).